A 104-amino-acid chain; its full sequence is Flagellar hook-basal body complex protein FliE (104 aa).

The protein belongs to the FliE family.

It is found in the bacterial flagellum basal body. The sequence is that of Flagellar hook-basal body complex protein FliE from Enterobacter sp. (strain 638).